We begin with the raw amino-acid sequence, 172 residues long: Large ribosomal subunit protein uL10 (172 aa).

The protein belongs to the universal ribosomal protein uL10 family. Part of the ribosomal stalk of the 50S ribosomal subunit. The N-terminus interacts with L11 and the large rRNA to form the base of the stalk. The C-terminus forms an elongated spine to which L12 dimers bind in a sequential fashion forming a multimeric L10(L12)X complex.

Its function is as follows. Forms part of the ribosomal stalk, playing a central role in the interaction of the ribosome with GTP-bound translation factors. This Idiomarina loihiensis (strain ATCC BAA-735 / DSM 15497 / L2-TR) protein is Large ribosomal subunit protein uL10.